The chain runs to 663 residues: Leishmanolysin-like peptidase (663 aa).

A Zn(2+)-binding site is contributed by H246. The active site involves E247. The Zn(2+) site is built by H250 and H353.

It belongs to the peptidase M8 family. Zn(2+) is required as a cofactor.

Its subcellular location is the cytoplasm. Functionally, essential for the coordination of mitotic progression, and also plays a role in cell migration. The chain is Leishmanolysin-like peptidase from Caenorhabditis elegans.